The sequence spans 249 residues: tRNA pseudouridine synthase A (249 aa).

Aspartate 52 functions as the Nucleophile in the catalytic mechanism. A substrate-binding site is contributed by tyrosine 110.

It belongs to the tRNA pseudouridine synthase TruA family. As to quaternary structure, homodimer.

It carries out the reaction uridine(38/39/40) in tRNA = pseudouridine(38/39/40) in tRNA. Formation of pseudouridine at positions 38, 39 and 40 in the anticodon stem and loop of transfer RNAs. This chain is tRNA pseudouridine synthase A, found in Exiguobacterium sibiricum (strain DSM 17290 / CCUG 55495 / CIP 109462 / JCM 13490 / 255-15).